Here is a 74-residue protein sequence, read N- to C-terminus: Exodeoxyribonuclease 7 small subunit (74 aa).

This sequence belongs to the XseB family. Heterooligomer composed of large and small subunits.

It is found in the cytoplasm. It catalyses the reaction Exonucleolytic cleavage in either 5'- to 3'- or 3'- to 5'-direction to yield nucleoside 5'-phosphates.. Its function is as follows. Bidirectionally degrades single-stranded DNA into large acid-insoluble oligonucleotides, which are then degraded further into small acid-soluble oligonucleotides. The protein is Exodeoxyribonuclease 7 small subunit of Clostridium botulinum (strain Eklund 17B / Type B).